The sequence spans 215 residues: MTQSLADMRRDYTRDGLAEAQAPGEPFALFHHWFADAVKTEQLPVEANAMTLATVDADGRPHCRVLLLKALDGRGFTFFTNYESAKGQHIAANPFAAMTFFWPALERQVRIEGRVEKVTAKESDDYYQVRPLGSRLGAWASPQSRVIADREELEGLVKATEARFSDTQPHCPEHWGGYRLLPERIEFWQGRASRLHDRLNYRLVDGQWQRERLAP.

Residues Arg9–Tyr12 and Lys69 contribute to the substrate site. FMN-binding positions include Arg64–Lys69, Phe79–Thr80, Lys86, and Gln108. Substrate contacts are provided by Tyr126, Arg130, and Ser134. Residues Gln143–Ser144 and Trp188 contribute to the FMN site. Position 194 to 196 (Arg194 to His196) interacts with substrate. Arg198 is an FMN binding site.

This sequence belongs to the pyridoxamine 5'-phosphate oxidase family. In terms of assembly, homodimer. It depends on FMN as a cofactor.

The catalysed reaction is pyridoxamine 5'-phosphate + O2 + H2O = pyridoxal 5'-phosphate + H2O2 + NH4(+). It carries out the reaction pyridoxine 5'-phosphate + O2 = pyridoxal 5'-phosphate + H2O2. It functions in the pathway cofactor metabolism; pyridoxal 5'-phosphate salvage; pyridoxal 5'-phosphate from pyridoxamine 5'-phosphate: step 1/1. Its pathway is cofactor metabolism; pyridoxal 5'-phosphate salvage; pyridoxal 5'-phosphate from pyridoxine 5'-phosphate: step 1/1. Catalyzes the oxidation of either pyridoxine 5'-phosphate (PNP) or pyridoxamine 5'-phosphate (PMP) into pyridoxal 5'-phosphate (PLP). The sequence is that of Pyridoxine/pyridoxamine 5'-phosphate oxidase from Pseudomonas entomophila (strain L48).